The following is a 116-amino-acid chain: Class I hydrophobin 1 (116 aa).

The first 19 residues, 1-19 (MLFKQAILVATTLTTLAVA), serve as a signal peptide directing secretion. 4 cysteine pairs are disulfide-bonded: C35/C95, C42/C89, C43/C76, and C96/C109. N44 and N100 each carry an N-linked (GlcNAc...) asparagine glycan.

The protein belongs to the fungal hydrophobin family. Self-assembles to form functional amyloid fibrils called rodlets. Self-assembly into fibrillar rodlets occurs spontaneously at hydrophobic:hydrophilic interfaces and the rodlets further associate laterally to form amphipathic monolayers.

Its subcellular location is the secreted. The protein resides in the cell wall. Functionally, aerial growth, conidiation, and dispersal of filamentous fungi in the environment rely upon a capability of their secreting small amphipathic proteins called hydrophobins (HPBs) with low sequence identity. Class I can self-assemble into an outermost layer of rodlet bundles on aerial cell surfaces, conferring cellular hydrophobicity that supports fungal growth, development and dispersal; whereas Class II form highly ordered films at water-air interfaces through intermolecular interactions but contribute nothing to the rodlet structure. The sequence is that of Class I hydrophobin 1 from Pleurotus ostreatus (strain PC15) (Oyster mushroom).